A 203-amino-acid chain; its full sequence is Glycerol-3-phosphate acyltransferase (203 aa).

The next 5 helical transmembrane spans lie at 4–24 (IAPG…AILV), 56–76 (VAVL…AYML), 80–100 (PFWL…PVFF), 112–132 (FGAI…TWLL), and 138–158 (GYSS…VWWF).

It belongs to the PlsY family. In terms of assembly, probably interacts with PlsX.

Its subcellular location is the cell inner membrane. The enzyme catalyses an acyl phosphate + sn-glycerol 3-phosphate = a 1-acyl-sn-glycero-3-phosphate + phosphate. It functions in the pathway lipid metabolism; phospholipid metabolism. Its function is as follows. Catalyzes the transfer of an acyl group from acyl-phosphate (acyl-PO(4)) to glycerol-3-phosphate (G3P) to form lysophosphatidic acid (LPA). This enzyme utilizes acyl-phosphate as fatty acyl donor, but not acyl-CoA or acyl-ACP. This chain is Glycerol-3-phosphate acyltransferase, found in Enterobacter sp. (strain 638).